The chain runs to 516 residues: Ammonium transporter Amt1 (516 aa).

The next 11 membrane-spanning stretches (helical) occupy residues 17-37 (YVWI…FALL), 59-79 (ALGV…VGGL), 101-121 (IDWL…SGAV), 130-150 (YVVF…GLTW), 170-190 (LDFA…LVGA), 214-234 (MLLA…FNVG), 258-278 (VALV…VVST), 286-306 (PLWM…AVPH), 307-327 (VTWW…LPAY), 342-362 (VFAV…VFAV), and 374-394 (VAGV…VFAA). A disordered region spans residues 426–516 (IGESGPDRGV…SAAVDGGENQ (91 aa)). Basic and acidic residues predominate over residues 445–491 (NDVRTDGGNDVRTDGGNDVRTDGGNDVRTDGGNDVRTDGGNDVRTDG).

This sequence belongs to the ammonia transporter channel (TC 1.A.11.2) family. In terms of assembly, homotrimer. Interacts with both GlnK1 and GlnK2 after ammonium shock. Interaction is rapid, reversible and dependent on nitrogen source.

The protein resides in the cell membrane. Involved in the uptake of ammonium/ammonia (NH(4)(+)/NH(3)). Transport is electrogenic. This is Ammonium transporter Amt1 from Haloferax mediterranei (strain ATCC 33500 / DSM 1411 / JCM 8866 / NBRC 14739 / NCIMB 2177 / R-4) (Halobacterium mediterranei).